Consider the following 326-residue polypeptide: MSHEIKDLNNYHYTSSYNHYNINNQNMINLPYVSGPSAYNANMISSSQVGFDLPSKNLSPQGAFELGFELSPSSSDFFNPSLDQENGLYNAYNYNSSQKSHEVVGDGCATIKSEVRVSASPSSSEADHHPGEDSGKIRKKREVRDGGEDDQRSQKVVKTKKKEEKKKEPRVSFMTKTEVDHLEDGYRWRKYGQKAVKNSPYPRSYYRCTTQKCNVKKRVERSYQDPTVVITTYESQHNHPIPTNRRTAMFSGTTASDYNPSSSPIFSDLIINTPRSFSNDDLFRVPYASVNVNPSYHQQQHGFHQQESEFELLKEMFPSVFFKQEP.

The segment at 115-172 (VRVSASPSSSEADHHPGEDSGKIRKKREVRDGGEDDQRSQKVVKTKKKEEKKKEPRVS) is disordered. Composition is skewed to basic and acidic residues over residues 125–153 (EADHHPGEDSGKIRKKREVRDGGEDDQRS) and 161–170 (KKEEKKKEPR). Residues 177 to 242 (TEVDHLEDGY…YESQHNHPIP (66 aa)) constitute a DNA-binding region (WRKY).

The protein belongs to the WRKY group II-c family. As to quaternary structure, interacts with VQ9 (via N-terminus). In terms of tissue distribution, highly expressed in roots and at lower levels in rosette leaves, cauline leaves, stems, flowers and siliques.

The protein resides in the nucleus. Its function is as follows. Transcription factor. Interacts specifically with the W box (5'-TTGAC[CT]-3'), a frequently occurring stress-responsive cis-acting element. Functions as a positive regulator of salt stress response. Binds the W box of LTI78/RD29A stress-response gene and directly regulates its transcription under salt stress. Functions antagonistically with VQ9 to regulate sodium and potassium homeostasis under salt stress by regulating the expression of downstream SOS (SALT OVERLY SENSITIVE) stress-responsive genes. The DNA-binding activity of WRKY8 is decreased by VQ9. Functions as a negative regulator of basal resistance to the bacterial pathogen P.syringae and as positive regulator of resistance to the fungal pathogen to B.cinerea. Functions as a positive regulator of defense response againt tobamovirus (TMV) by regulating both the abscisic acid and ethylene signaling pathways. Positively regulates ABI4 expression and negatively modulates ACS6 and ERF104 expression by directly binding to the W box consensus motifs within their promoters. This is WRKY transcription factor 8 (WRKY8) from Arabidopsis thaliana (Mouse-ear cress).